Here is a 63-residue protein sequence, read N- to C-terminus: Cytochrome c oxidase subunit 7C, mitochondrial (63 aa).

A mitochondrion-targeting transit peptide spans 1–16; sequence MLGQSIRRFTTSVVRR. The Mitochondrial matrix portion of the chain corresponds to 17-33; the sequence is SHYEEGPGKNLPFSVEN. K25 carries the N6-acetyllysine; alternate modification. K25 carries the post-translational modification N6-succinyllysine; alternate. A helical membrane pass occupies residues 34 to 60; it reads KWSLLAKMCLYFGSAFATPFLVVRHQL. The Mitochondrial intermembrane portion of the chain corresponds to 61–63; the sequence is LKT.

Belongs to the cytochrome c oxidase VIIc family. In terms of assembly, component of the cytochrome c oxidase (complex IV, CIV), a multisubunit enzyme composed of 14 subunits. The complex is composed of a catalytic core of 3 subunits MT-CO1, MT-CO2 and MT-CO3, encoded in the mitochondrial DNA, and 11 supernumerary subunits COX4I1 (or COX4I2), COX5A, COX5B, COX6A1 (or COX6A2), COX6B1 (or COX6B2), COX6C, COX7A2 (or COX7A1), COX7B, COX7C, COX8A and NDUFA4, which are encoded in the nuclear genome. The complex exists as a monomer or a dimer and forms supercomplexes (SCs) in the inner mitochondrial membrane with NADH-ubiquinone oxidoreductase (complex I, CI) and ubiquinol-cytochrome c oxidoreductase (cytochrome b-c1 complex, complex III, CIII), resulting in different assemblies (supercomplex SCI(1)III(2)IV(1) and megacomplex MCI(2)III(2)IV(2)). Interacts with RAB5IF.

It localises to the mitochondrion inner membrane. The protein operates within energy metabolism; oxidative phosphorylation. In terms of biological role, component of the cytochrome c oxidase, the last enzyme in the mitochondrial electron transport chain which drives oxidative phosphorylation. The respiratory chain contains 3 multisubunit complexes succinate dehydrogenase (complex II, CII), ubiquinol-cytochrome c oxidoreductase (cytochrome b-c1 complex, complex III, CIII) and cytochrome c oxidase (complex IV, CIV), that cooperate to transfer electrons derived from NADH and succinate to molecular oxygen, creating an electrochemical gradient over the inner membrane that drives transmembrane transport and the ATP synthase. Cytochrome c oxidase is the component of the respiratory chain that catalyzes the reduction of oxygen to water. Electrons originating from reduced cytochrome c in the intermembrane space (IMS) are transferred via the dinuclear copper A center (CU(A)) of subunit 2 and heme A of subunit 1 to the active site in subunit 1, a binuclear center (BNC) formed by heme A3 and copper B (CU(B)). The BNC reduces molecular oxygen to 2 water molecules using 4 electrons from cytochrome c in the IMS and 4 protons from the mitochondrial matrix. The polypeptide is Cytochrome c oxidase subunit 7C, mitochondrial (COX7C) (Homo sapiens (Human)).